The chain runs to 337 residues: Phosphate acyltransferase (337 aa).

This sequence belongs to the PlsX family. As to quaternary structure, homodimer. Probably interacts with PlsY.

It is found in the cytoplasm. The catalysed reaction is a fatty acyl-[ACP] + phosphate = an acyl phosphate + holo-[ACP]. Its pathway is lipid metabolism; phospholipid metabolism. In terms of biological role, catalyzes the reversible formation of acyl-phosphate (acyl-PO(4)) from acyl-[acyl-carrier-protein] (acyl-ACP). This enzyme utilizes acyl-ACP as fatty acyl donor, but not acyl-CoA. The sequence is that of Phosphate acyltransferase from Moritella marina (Vibrio marinus).